Here is a 166-residue protein sequence, read N- to C-terminus: DNA polymerase epsilon subunit C (166 aa).

The interval 112–166 (SPEIDIESEDEVDEANEPEVGEPEVDEAEVEAEVEAEAAEPETHTLDEPRPESSS) is disordered. The segment covering 115–151 (IDIESEDEVDEANEPEVGEPEVDEAEVEAEVEAEAAE) has biased composition (acidic residues). Residues 152–166 (PETHTLDEPRPESSS) are compositionally biased toward basic and acidic residues.

Heterotetramer. Consists of four subunits: POL2, DPB2, DPB3 and DPB4.

Its subcellular location is the nucleus. Its function is as follows. As accessory component of the DNA polymerase epsilon (DNA polymerase II) participates in chromosomal DNA replication. This is DNA polymerase epsilon subunit C (DPB3) from Kluyveromyces lactis (strain ATCC 8585 / CBS 2359 / DSM 70799 / NBRC 1267 / NRRL Y-1140 / WM37) (Yeast).